A 286-amino-acid chain; its full sequence is ATP synthase gamma chain (286 aa).

This sequence belongs to the ATPase gamma chain family. F-type ATPases have 2 components, CF(1) - the catalytic core - and CF(0) - the membrane proton channel. CF(1) has five subunits: alpha(3), beta(3), gamma(1), delta(1), epsilon(1). CF(0) has three main subunits: a, b and c.

The protein localises to the cell membrane. Functionally, produces ATP from ADP in the presence of a proton gradient across the membrane. The gamma chain is believed to be important in regulating ATPase activity and the flow of protons through the CF(0) complex. This chain is ATP synthase gamma chain, found in Oceanobacillus iheyensis (strain DSM 14371 / CIP 107618 / JCM 11309 / KCTC 3954 / HTE831).